We begin with the raw amino-acid sequence, 170 residues long: Phosphopantetheine adenylyltransferase (170 aa).

Substrate is bound at residue Ser-14. Residues 14–15 (SF) and His-22 contribute to the ATP site. Substrate-binding residues include Lys-46, Leu-79, and Arg-93. ATP contacts are provided by residues 94-96 (GIR), Glu-104, and 129-135 (IAEVSST).

It belongs to the bacterial CoaD family. Homohexamer. Mg(2+) serves as cofactor.

The protein localises to the cytoplasm. The catalysed reaction is (R)-4'-phosphopantetheine + ATP + H(+) = 3'-dephospho-CoA + diphosphate. It functions in the pathway cofactor biosynthesis; coenzyme A biosynthesis; CoA from (R)-pantothenate: step 4/5. Its function is as follows. Reversibly transfers an adenylyl group from ATP to 4'-phosphopantetheine, yielding dephospho-CoA (dPCoA) and pyrophosphate. The sequence is that of Phosphopantetheine adenylyltransferase from Neisseria meningitidis serogroup C (strain 053442).